The following is a 1150-amino-acid chain: ATP-dependent helicase/deoxyribonuclease subunit B (1150 aa).

Residue 8-15 (GRAGSGKS) participates in ATP binding. Residues cysteine 786, cysteine 1106, cysteine 1109, and cysteine 1115 each contribute to the [4Fe-4S] cluster site.

This sequence belongs to the helicase family. AddB/RexB type 1 subfamily. As to quaternary structure, heterodimer of AddA and AddB. Mg(2+) is required as a cofactor. Requires [4Fe-4S] cluster as cofactor.

Functionally, the heterodimer acts as both an ATP-dependent DNA helicase and an ATP-dependent, dual-direction single-stranded exonuclease. Recognizes the chi site generating a DNA molecule suitable for the initiation of homologous recombination. The AddB subunit has 5' -&gt; 3' nuclease activity but not helicase activity. In Clostridium botulinum (strain Okra / Type B1), this protein is ATP-dependent helicase/deoxyribonuclease subunit B.